The following is a 218-amino-acid chain: CTD kinase subunit gamma (218 aa).

Residues 2-138 enclose the CID domain; it reads DPFEGRMTFL…DAMATVEAHE (137 aa). A disordered region spans residues 137-157; the sequence is HEQASKSGDTSTSGAISKNDI. Positions 141-152 are enriched in polar residues; it reads SKSGDTSTSGAI.

It belongs to the CTK3 family. CTDK-I consists of three subunits, ctk1/lsk1, ctk2/lsc1 and ctk3 (also called alpha, beta and gamma).

The protein resides in the cytoplasm. Its subcellular location is the nucleus. In terms of biological role, subunit of the CTDK-I complex, which hyperphosphorylates the C-terminal heptapeptide repeat domain (CTD) of the largest RNA polymerase II subunit. As part of the CTDK-I complex, involved in RNA polymerase II transcriptional elongation and pre-mRNA 3'-end processing. Together with ctk2, required for ctk1/lsk1 CTD kinase activation. The chain is CTD kinase subunit gamma from Schizosaccharomyces pombe (strain 972 / ATCC 24843) (Fission yeast).